Here is a 207-residue protein sequence, read N- to C-terminus: Ribosomal RNA small subunit methyltransferase G (207 aa).

S-adenosyl-L-methionine contacts are provided by residues glycine 73, leucine 78, 124–125, and arginine 139; that span reads VE.

This sequence belongs to the methyltransferase superfamily. RNA methyltransferase RsmG family.

It localises to the cytoplasm. The enzyme catalyses guanosine(527) in 16S rRNA + S-adenosyl-L-methionine = N(7)-methylguanosine(527) in 16S rRNA + S-adenosyl-L-homocysteine. Functionally, specifically methylates the N7 position of guanine in position 527 of 16S rRNA. The polypeptide is Ribosomal RNA small subunit methyltransferase G (Klebsiella pneumoniae subsp. pneumoniae (strain ATCC 700721 / MGH 78578)).